The primary structure comprises 1528 residues: 5'-3' exoribonuclease 1 (1528 aa).

Disordered regions lie at residues 1246–1331 (SKKA…KSSE), 1431–1455 (PPPA…NVSD), and 1470–1528 (LKKF…DEST). Basic and acidic residues predominate over residues 1274 to 1304 (QSEEKLRKERAHDLLNFIKKDTNEKNSESVD). Positions 1317-1326 (AKKVLLKRPA) are enriched in basic residues. Residues 1500-1517 (SSGTNSTECQSPKSQSNA) are compositionally biased toward polar residues. Residue threonine 1506 is modified to Phosphothreonine. At serine 1510 the chain carries Phosphoserine. Positions 1518-1528 (ADRDNKKDEST) are enriched in basic and acidic residues.

Belongs to the 5'-3' exonuclease family. Mg(2+) serves as cofactor.

The protein localises to the cytoplasm. Its subcellular location is the perinuclear region. It is found in the P-body. With respect to regulation, 3'-phosphoadenosine 5'-phosphate (pAp) is an inhibitor of KEM1. Sodium-induced GCN4 expression reduces pAp accumulation by activating HAL2 expression, and therefore maintains mRNA degradation capacity which is likely to be important for the accurate and rapid adaptation of gene expression to salt stress. Its function is as follows. Multifunctional protein that exhibits several independent functions at different levels of the cellular processes. 5'-3' exonuclease component of the nonsense-mediated mRNA decay (NMD) which is a highly conserved mRNA degradation pathway, an RNA surveillance system whose role is to identify and rid cells of mRNA with premature termination codons and thus prevents accumulation of potentially harmful truncated proteins. The NMD pathway has a second role regulating the decay of wild-type mRNAs, and especially mRNAs that are important for telomere functions. Participate in CTH2-mediated and VTS1-mediated mRNA turnover. Involved in the degradation of several hypomodified mature tRNA species and participates in the 5'-processing or the degradation of the snoRNA precursors and rRNA processing. Involved in defense against virus and suppresses viral RNA recombination by rapidly removing the 5'-truncated RNAs, the substrates of recombination, and thus reducing the chance for recombination to occur in the parental strain. Required for the assembly of the virus-like particles of the Ty3 retrotransposon and contributes to the efficient generation of narnavirus 20S RNA by playing a major role in the elimination of the non-viral upstream sequences from the primary transcripts. Degrades single-stranded DNA (ss-DNA) and can renature complementary ss-DNA as well as catalyzes the formation of heteroduplex DNA from circular ss-DNA and homologous linear ds-DNA in vitro. Acts as a microtubule-associated protein which interacts with cytoplasmic microtubules through beta-tubulin and promotes in vitro assembly of tubulin into microtubules. Associates with microtubule functions such as chromosome transmission, nuclear migration, and SPB duplication. Has also a role in G1 to S transition and is involved in nuclear fusion during karyogamy. Required for the expression of ROK1 at the post-transcriptional level and for the alpha-factor induction of the karyogamy genes KAR3 and KAR4. Plays a role in filamentous growth. The polypeptide is 5'-3' exoribonuclease 1 (XRN1) (Saccharomyces cerevisiae (strain ATCC 204508 / S288c) (Baker's yeast)).